The sequence spans 61 residues: Metallothionein-2 (61 aa).

M1 carries the N-acetylmethionine modification. Positions 1 to 29 are beta; it reads MDPNCSCATDGSCSCAGSCKCKQCKCTSC. The a divalent metal cation site is built by C5, C7, C13, C15, C19, C21, C24, C26, C29, C33, C34, C36, C37, C41, C44, C48, C50, and C57. Positions 30–61 are alpha; the sequence is KKSCCSCCPVGCAKCSQGCICKEASDKCSCCA. A Phosphoserine modification is found at S58. Residues C59 and C60 each contribute to the a divalent metal cation site.

It belongs to the metallothionein superfamily. Type 1 family.

Functionally, metallothioneins have a high content of cysteine residues that bind various heavy metals; these proteins are transcriptionally regulated by both heavy metals and glucocorticoids. The polypeptide is Metallothionein-2 (Mt2) (Rattus norvegicus (Rat)).